The chain runs to 136 residues: Ribosome-binding factor A (136 aa).

The protein belongs to the RbfA family. Monomer. Binds 30S ribosomal subunits, but not 50S ribosomal subunits or 70S ribosomes.

It is found in the cytoplasm. Its function is as follows. One of several proteins that assist in the late maturation steps of the functional core of the 30S ribosomal subunit. Associates with free 30S ribosomal subunits (but not with 30S subunits that are part of 70S ribosomes or polysomes). Required for efficient processing of 16S rRNA. May interact with the 5'-terminal helix region of 16S rRNA. This Serratia proteamaculans (strain 568) protein is Ribosome-binding factor A.